The chain runs to 121 residues: Natriuretic peptides B (121 aa).

Residues 1-26 (MDLLKVLSQMILFLLFLYLSPLGGHS) form the signal peptide. The tract at residues 61-89 (LKDQGLTKEHPKRVLRSQGSTLRVQQRPQ) is disordered. Over residues 77–89 (SQGSTLRVQQRPQ) the composition is skewed to polar residues. An intrachain disulfide couples cysteine 99 to cysteine 115.

Belongs to the natriuretic peptide family. Post-translationally, the precursor molecule is proteolytically cleaved by the endoprotease Furin to produce brain natriuretic peptide 45. May undergo further proteolytic cleavage by various proteases such as DPP4, MME and possibly FAP, to give rise to a variety of shorter peptides. May be cleaved at Ser-91 by the prolyl endopeptidase FAP (seprase) activity (in vitro). May be degraded by IDE. During IDE degradation, the resulting products initially increase the activation of NPR1 and can also stimulate NPR2 to produce cGMP before the fragments are completely degraded and inactivated by IDE (in vitro). Expressed abundantly in the ventricle, and in a lesser extent in the atrium (at protein level).

The protein localises to the secreted. Cardiac hormone that plays a key role in mediating cardio-renal homeostasis. May also function as a paracrine antifibrotic factor in the heart. Acts by specifically binding and stimulating NPR1 to produce cGMP, which in turn activates effector proteins that drive various biological responses. Likely involved in regulating the extracellular fluid volume and maintaining the fluid-electrolyte balance through natriuresis, diuresis, kaluresis and chloruresis. The polypeptide is Natriuretic peptides B (Nppb) (Mus musculus (Mouse)).